Consider the following 554-residue polypeptide: Condensin-2 complex subunit H2 (554 aa).

Phosphoserine is present on residues serine 45, serine 178, serine 182, serine 199, and serine 200. The tract at residues 154-296 (PVDVHPMPRS…GQKRKRKGAT (143 aa)) is disordered. Residues 179-191 (RNGSPVSVRSISQ) are compositionally biased toward polar residues. Positions 201 to 210 (GDEDAEDVAE) are enriched in acidic residues. Serine 441 carries the phosphoserine modification.

It belongs to the CND2 H2 (condensin-2 subunit 2) family. In terms of assembly, component of the condensin-2 complex, which contains the SMC2 and SMC4 heterodimer, and three non SMC subunits, NCAPG2, NCAPH2 and NCAPD3 that probably regulate the complex.

It localises to the nucleus. Regulatory subunit of the condensin-2 complex, a complex that seems to provide chromosomes with an additional level of organization and rigidity and in establishing mitotic chromosome architecture. May promote the resolution of double-strand DNA catenanes (intertwines) between sister chromatids. Condensin-mediated compaction likely increases tension in catenated sister chromatids, providing directionality for type II topoisomerase-mediated strand exchanges toward chromatid decatenation. Required for decatenation of chromatin bridges at anaphase. Early in neurogenesis, may play an essential role to ensure accurate mitotic chromosome condensation in neuron stem cells, ultimately affecting neuron pool and cortex size. Seems to have lineage-specific role in T-cell development. This is Condensin-2 complex subunit H2 (Ncaph2) from Rattus norvegicus (Rat).